The following is a 682-amino-acid chain: MWLKLFFLLLYFLVLFVLARFFEAIVWYETGIFATQLVDPVALSFKKLKTILECRGLGYSGLPEKKDVRELVEKSGDLMEGELYSALKEEEASESVSSTNFSGEMHFYELVEDTKDGIWLVQVIANDRSPLVGKIHWEKMVKKVSRFGIRTGTFNCSSDPRYCRRRGWVRSTLIMSVPQTSTSKGKVMLKEYSGRKIEVEHIFKWITAHAASRIKTIYNVEHLKEEWNKSDQYWVKIYLFANLDQPPAFFSALSIKFTGRVEFIFVNVENWNNKSYMTDIGIYNMPSYILRTPEGIYRYGNHTGEFISLQAMDSFLRSLQPEVNDLFVLSLVLVNLMAWMDLFITQGATIKRFVVLISTLGTYNSLLIISWLPVLGFLQLPYLDSFYEYSLRLLRYSNTTTLASWVRADWMFYSSHPALFLSTYLGHGLLIDYFEKKRRRSNNDEVNANNLEWLSSLWDWYTSYLFHPIASFQNFPVDSDWDEDPDLFLERLAFPDLWLHPLIPTDYIKNLPMWRFKCLGAQSEEEMSESSQDTENDSDSDNTDTFSSSKDVFEDKQNVHSSPGRTSRCDTEACSCANKCVSSPCERKRRSYGSHNTKEDMEPDWLTWPAGTLHCTECVVCLENFENGCLLMGLPCGHVFHQNCIVMWLAGGRHCCPVCRWPSYKKKQPYAQQQPLSNDAPS.

4 helical membrane-spanning segments follow: residues 6–26 (FFLLLYFLVLFVLARFFEAIV), 326–346 (LFVLSLVLVNLMAWMDLFITQ), 366–386 (LLIISWLPVLGFLQLPYLDSF), and 411–431 (MFYSSHPALFLSTYLGHGLLI). Residues 525–542 (EEMSESSQDTENDSDSDN) show a composition bias toward acidic residues. Positions 525–549 (EEMSESSQDTENDSDSDNTDTFSSS) are disordered. The RING-type zinc-finger motif lies at 618–660 (CVVCLENFENGCLLMGLPCGHVFHQNCIVMWLAGGRHCCPVCR).

As to quaternary structure, interacts with DERL1 and VCP. As to expression, expressed in different tissues including hippocampus, cerebral cortex, heart, kidney, spleen and lung. Expression is increased in hippocampus and frontal cortex after chronic treatment with antidepressants.

The protein resides in the endoplasmic reticulum membrane. The catalysed reaction is S-ubiquitinyl-[E2 ubiquitin-conjugating enzyme]-L-cysteine + [acceptor protein]-L-lysine = [E2 ubiquitin-conjugating enzyme]-L-cysteine + N(6)-ubiquitinyl-[acceptor protein]-L-lysine.. The protein operates within protein modification; protein ubiquitination. In terms of biological role, acts as an E2-dependent E3 ubiquitin-protein ligase, probably involved in the ER-associated protein degradation pathway. The polypeptide is E3 ubiquitin-protein ligase RNF103 (Rnf103) (Rattus norvegicus (Rat)).